We begin with the raw amino-acid sequence, 444 residues long: Methylenetetrahydrofolate--tRNA-(uracil-5-)-methyltransferase TrmFO (444 aa).

Position 10 to 15 (10 to 15 (GAGLAG)) interacts with FAD.

It belongs to the MnmG family. TrmFO subfamily. Requires FAD as cofactor.

The protein localises to the cytoplasm. It catalyses the reaction uridine(54) in tRNA + (6R)-5,10-methylene-5,6,7,8-tetrahydrofolate + NADH + H(+) = 5-methyluridine(54) in tRNA + (6S)-5,6,7,8-tetrahydrofolate + NAD(+). The enzyme catalyses uridine(54) in tRNA + (6R)-5,10-methylene-5,6,7,8-tetrahydrofolate + NADPH + H(+) = 5-methyluridine(54) in tRNA + (6S)-5,6,7,8-tetrahydrofolate + NADP(+). Catalyzes the folate-dependent formation of 5-methyl-uridine at position 54 (M-5-U54) in all tRNAs. The chain is Methylenetetrahydrofolate--tRNA-(uracil-5-)-methyltransferase TrmFO from Streptococcus uberis (strain ATCC BAA-854 / 0140J).